A 244-amino-acid polypeptide reads, in one-letter code: MPKKYGVKEKDQVVAHILNLLLTGKLRSGDRVDRNEIAHGLGVSRVPIQEALVQLEHDGIVSTRYHRGAFIERFDVATILEHHELDGLLNGIASARAAANPTPRILGQLDAVMRSLRNSKESRAFAECVWEYRRTVNDEYAGPRLHATIRASQNLIPRVFWMTYQNSRDDVLPFYEEENAAIHRREPEAARAACIGRSELMAQTMLAELFRRRVLVPPEGACPGPFGAPIPGFARSYQPSSPVP.

One can recognise an HTH gntR-type domain in the interval 7 to 74; the sequence is VKEKDQVVAH…YHRGAFIERF (68 aa). Residues 34 to 53 constitute a DNA-binding region (H-T-H motif); that stretch reads RNEIAHGLGVSRVPIQEALV.

This is an uncharacterized protein from Mycobacterium tuberculosis (strain CDC 1551 / Oshkosh).